Reading from the N-terminus, the 122-residue chain is Large ribosomal subunit protein uL14c (122 aa).

It belongs to the universal ribosomal protein uL14 family. Part of the 50S ribosomal subunit.

Its subcellular location is the plastid. It is found in the chloroplast. Its function is as follows. Binds to 23S rRNA. The sequence is that of Large ribosomal subunit protein uL14c from Citrus sinensis (Sweet orange).